The following is a 263-amino-acid chain: Endonuclease 8 (263 aa).

Catalysis depends on Pro-2, which acts as the Schiff-base intermediate with DNA. Glu-3 acts as the Proton donor in catalysis. The active-site Proton donor; for beta-elimination activity is the Lys-53. 3 residues coordinate DNA: Gln-70, Arg-125, and Asn-169. The FPG-type zinc finger occupies 229–263 (KVFHRDGELCERCGGIIEKTTLSSRPFYWCPGCQH). The active-site Proton donor; for delta-elimination activity is Arg-253.

It belongs to the FPG family. The cofactor is Zn(2+).

It catalyses the reaction 2'-deoxyribonucleotide-(2'-deoxyribose 5'-phosphate)-2'-deoxyribonucleotide-DNA = a 3'-end 2'-deoxyribonucleotide-(2,3-dehydro-2,3-deoxyribose 5'-phosphate)-DNA + a 5'-end 5'-phospho-2'-deoxyribonucleoside-DNA + H(+). Its function is as follows. Involved in base excision repair of DNA damaged by oxidation or by mutagenic agents. Acts as a DNA glycosylase that recognizes and removes damaged bases. Has a preference for oxidized pyrimidines, such as thymine glycol, 5,6-dihydrouracil and 5,6-dihydrothymine. Has AP (apurinic/apyrimidinic) lyase activity and introduces nicks in the DNA strand. Cleaves the DNA backbone by beta-delta elimination to generate a single-strand break at the site of the removed base with both 3'- and 5'-phosphates. This chain is Endonuclease 8, found in Escherichia coli O7:K1 (strain IAI39 / ExPEC).